Reading from the N-terminus, the 557-residue chain is Dihydroxy-acid dehydratase (557 aa).

Asp-78 contacts Mg(2+). Position 119 (Cys-119) interacts with [2Fe-2S] cluster. Mg(2+) contacts are provided by Asp-120 and Lys-121. Lys-121 carries the N6-carboxylysine modification. Position 192 (Cys-192) interacts with [2Fe-2S] cluster. Position 446 (Glu-446) interacts with Mg(2+). The active-site Proton acceptor is the Ser-472.

This sequence belongs to the IlvD/Edd family. Homodimer. It depends on [2Fe-2S] cluster as a cofactor. The cofactor is Mg(2+).

The catalysed reaction is (2R)-2,3-dihydroxy-3-methylbutanoate = 3-methyl-2-oxobutanoate + H2O. It catalyses the reaction (2R,3R)-2,3-dihydroxy-3-methylpentanoate = (S)-3-methyl-2-oxopentanoate + H2O. Its pathway is amino-acid biosynthesis; L-isoleucine biosynthesis; L-isoleucine from 2-oxobutanoate: step 3/4. The protein operates within amino-acid biosynthesis; L-valine biosynthesis; L-valine from pyruvate: step 3/4. Functionally, functions in the biosynthesis of branched-chain amino acids. Catalyzes the dehydration of (2R,3R)-2,3-dihydroxy-3-methylpentanoate (2,3-dihydroxy-3-methylvalerate) into 2-oxo-3-methylpentanoate (2-oxo-3-methylvalerate) and of (2R)-2,3-dihydroxy-3-methylbutanoate (2,3-dihydroxyisovalerate) into 2-oxo-3-methylbutanoate (2-oxoisovalerate), the penultimate precursor to L-isoleucine and L-valine, respectively. In Campylobacter fetus subsp. fetus (strain 82-40), this protein is Dihydroxy-acid dehydratase.